Reading from the N-terminus, the 259-residue chain is Short-chain dehydrogenase chry4 (259 aa).

Arginine 37, aspartate 55, asparagine 81, tyrosine 154, lysine 158, valine 185, and threonine 187 together coordinate NADP(+). The active-site Proton donor is the tyrosine 154. Lysine 158 acts as the Lowers pKa of active site Tyr in catalysis.

The protein belongs to the short-chain dehydrogenases/reductases (SDR) family.

It functions in the pathway pigment biosynthesis. In terms of biological role, short-chain dehydrogenase; part of the gene cluster that mediates the biosynthesis of the yellow pigment chrysogine. Pyruvic acid and anthranilic acid are likely substrates for the nonribosomal peptide synthetase chry1/NRPS14, with pyruvic acid adenylated by the first A domain and anthranilic acid by the second. If pyruvic acid and anthranilic acid are merged and released from chry1/NRPS14 by hydrolysis, a subsequent amidation would lead to 2-pyruvoylaminobenzamide. This process is probably catalyzed by the amidotransferase chry2 using glutamine as amino donor. The dehydrogenase chry5 that has a terminal berberine bridge domain for C-N cyclization could catalyze the cyclization of 2-pyruvoylaminobenzamide to yield acetyl-4(3H)-quinazolidinone. A final reduction of acetyl-4(3H)-quinazolidinone catalyzed by the oxidoreductase chry4 would result in chrysogine. This Gibberella zeae (strain ATCC MYA-4620 / CBS 123657 / FGSC 9075 / NRRL 31084 / PH-1) (Wheat head blight fungus) protein is Short-chain dehydrogenase chry4.